A 463-amino-acid chain; its full sequence is Glutamate--tRNA ligase 1 (463 aa).

Positions 10–20 (PSPTGYLHIGG) match the 'HIGH' region motif. The 'KMSKS' region signature appears at 238 to 242 (KLSKR). Position 241 (lysine 241) interacts with ATP.

Belongs to the class-I aminoacyl-tRNA synthetase family. Glutamate--tRNA ligase type 1 subfamily. As to quaternary structure, monomer.

The protein localises to the cytoplasm. The catalysed reaction is tRNA(Glu) + L-glutamate + ATP = L-glutamyl-tRNA(Glu) + AMP + diphosphate. Its function is as follows. Catalyzes the attachment of glutamate to tRNA(Glu) in a two-step reaction: glutamate is first activated by ATP to form Glu-AMP and then transferred to the acceptor end of tRNA(Glu). The polypeptide is Glutamate--tRNA ligase 1 (Helicobacter pylori (strain J99 / ATCC 700824) (Campylobacter pylori J99)).